A 1482-amino-acid polypeptide reads, in one-letter code: MVLELLKNNYERNDEHYYNEKVENNTSKHKKKKKKKKKHILVEESEKYDRNIDSENNEEAYNAYELIKTKPNNIYEEKYDFSFQNLDKKCLREKNNMRESYRNSKDIIQYGTNENDIFTEDMLENDNFDDDSFVEDDTMDYKTYNSYTKPEFNLFSKYSTESKKKNIMNNKKHSKIEDFYKKYKNNSEYSKQANEHDASIIQFLNNNKKSVDCGKMKDINFKKNDSQNYSESNKYKNEFFKNYNYDNKYTNNYAHDNNQDSNSYYYADENEPKDNHEEDNDTGDTYADNEEDEDNRDDNDDYSQYNQCEVESDTNQIRPNEKRYNESIKHINDSNLKINKELLLKRETYTKRDNIFYIKKDIIPYKKEHNNNRFSLYDSSKNNNEHNNNYEIKFMNYKKDSEKEGEQWLKNIKKEKDEEFLKKYMYENALKKTHSSKDLQFNRLDDEKNILHHDINVDNKMVRLDKYERSNIRDMRNKTNKCNMLRHDTAEFNKIRRKDEINNYSEYANKCLAGNIYEEDDSYILKRNELGHKELKVIDNPILNINPDDKKKPNIKSFLDKIKYRKNNELFLKNEHEKYVGIQETNKKDKIKMKFADILHTKNFSNFFHRGKNSIAKSLSPNNDKKNTSFNNEVFNLNILGKNDKNSDYKQYNINCSPYDHENTSFHPSVREETKYYENKESRKRLDYNCDEDNYIENSIQRYHENNIDYNSINIERTINLREDIKYNEFLNKPDKINSENFSNNFNDNKQKSLKNDDSNKIRDTNKLYYHDHLENTMRSNYIQKEYTEKISDILESNSNNMRKFINKMDYYTKKYEQNLYKNDEDIYTKENKFPDSRKEFYNKSDSPMKVTDGIKDSQYENYNRIKYKLKMKQEKQDKEDETDINIDKKLSRKMIENNKLKEENESNDELIVTPFYIKSKIDKVLKNSEIFERSARATFKQFDVKNKNFLHFSEIESLIQKLCYNLELPPVDKKILSIVYKDYDSSKNNCMNYMDFRQMYWDLLKQIKKKYYPTKNFKIKRNCIISRKKLQGYDYSSIYNYLSFKKILGCGAFGEVHLVEDNICKLYKVVKILKKKKMKNIKVNEEINVLIYLDHPNIIKIFDVYESVNCTYIVMELCEGGELMNKIKKPQIFSETYIKNIMFQILCAIAYMHSNNIAHKDLKPENILFKTDGYDTLKIIDFGLAELINKSEGISKTAAGTVLYMAPEVFKKKFTIKCDIWSAGVIMYFLFTKSLPFTGNTYEEVKQNIFNSEPDYQFLKLKMSKPALHLLKLMLEKDYSRRPMAAVLLHHPWFQGYFDPIDILPSTLNNIKSYMKHSNIRNVIVNIMAHELCVINNHVKYINDIFLKIDSNHNGSLSHREIYNVLSNAGVKKWDINRIIQALDVNDKGCITYTEFIAGCYRWKNIDSTFLKAAFNKIDKDEDGYISKSDLATLVHDNGVNNKDIENFFISVHSIKKNITKDKKINKISFEDFKDYMLSTF.

Disordered stretches follow at residues 250-320 (TNNY…IRPN) and 739-760 (SENF…DDSN). Residues 254 to 264 (AHDNNQDSNSY) are compositionally biased toward polar residues. Residues 277 to 301 (EEDNDTGDTYADNEEDEDNRDDNDD) show a composition bias toward acidic residues. Residues 302 to 318 (YSQYNQCEVESDTNQIR) are compositionally biased toward polar residues. Positions 739 to 748 (SENFSNNFND) are enriched in low complexity. A compositionally biased stretch (basic and acidic residues) spans 749 to 760 (NKQKSLKNDDSN). 2 EF-hand domains span residues 931 to 966 (IFER…LCYN) and 972 to 1007 (VDKK…LLKQ). Residues aspartate 985, serine 987, asparagine 989, cysteine 991, and aspartate 996 each contribute to the Ca(2+) site. Positions 1043–1295 (LSFKKILGCG…AAVLLHHPWF (253 aa)) constitute a Protein kinase domain. ATP is bound by residues 1049-1057 (LGCGAFGEV) and lysine 1072. Aspartate 1162 (proton acceptor) is an active-site residue. EF-hand domains follow at residues 1338–1373 (NHVK…AGVK), 1376–1406 (DINR…RWKN), 1407–1442 (IDST…NGVN), and 1468–1482 (KISF…LSTF). The Ca(2+) site is built by aspartate 1351, asparagine 1353, asparagine 1355, serine 1357, and glutamate 1362. Residues aspartate 1420, aspartate 1422, aspartate 1424, tyrosine 1426, and aspartate 1431 each coordinate Ca(2+).

This sequence belongs to the protein kinase superfamily. Ser/Thr protein kinase family. CDPK subfamily. Mg(2+) is required as a cofactor.

It catalyses the reaction L-seryl-[protein] + ATP = O-phospho-L-seryl-[protein] + ADP + H(+). The enzyme catalyses L-threonyl-[protein] + ATP = O-phospho-L-threonyl-[protein] + ADP + H(+). Activated by calcium. Calcium-dependent protein kinase which acts as a sensor and effector of intracellular Ca(2+) levels. In sporozoites, probably involved in the secretion of the cysteine protease that cleaves circumsporozoite protein CSP, thereby exposing CSP TSR domain, which binds with high affinity to highly sulfated heparan sulfate proteoglycans (HSPGs), resulting in productive invasion of the host hepatocytes. This Plasmodium berghei (strain Anka) protein is Calcium-dependent protein kinase 6.